Here is a 1296-residue protein sequence, read N- to C-terminus: Phosphoribosylformylglycinamidine synthase (1296 aa).

Residues 304–323 (WPGAATGSGGEIRDEGATGR) form a disordered region. ATP-binding positions include 306–317 (GAATGSGGEIRD) and A677. The Mg(2+) site is built by D678, E717, N721, and D885. An ATP-binding site is contributed by S887. Positions 1000–1013 (PDCADQEHQAKQDE) are enriched in basic and acidic residues. Residues 1000 to 1019 (PDCADQEHQAKQDESDPGLN) are disordered. Residues 1043–1296 (VAVLREQGVN…MFRNARKQLG (254 aa)) enclose the Glutamine amidotransferase type-1 domain. C1136 (nucleophile) is an active-site residue. Active-site residues include H1261 and E1263.

The protein in the N-terminal section; belongs to the FGAMS family. Monomer.

Its subcellular location is the cytoplasm. It catalyses the reaction N(2)-formyl-N(1)-(5-phospho-beta-D-ribosyl)glycinamide + L-glutamine + ATP + H2O = 2-formamido-N(1)-(5-O-phospho-beta-D-ribosyl)acetamidine + L-glutamate + ADP + phosphate + H(+). The protein operates within purine metabolism; IMP biosynthesis via de novo pathway; 5-amino-1-(5-phospho-D-ribosyl)imidazole from N(2)-formyl-N(1)-(5-phospho-D-ribosyl)glycinamide: step 1/2. In terms of biological role, phosphoribosylformylglycinamidine synthase involved in the purines biosynthetic pathway. Catalyzes the ATP-dependent conversion of formylglycinamide ribonucleotide (FGAR) and glutamine to yield formylglycinamidine ribonucleotide (FGAM) and glutamate. In Yersinia pseudotuberculosis serotype I (strain IP32953), this protein is Phosphoribosylformylglycinamidine synthase.